The sequence spans 232 residues: tRNA pseudouridine synthase B (232 aa).

The Nucleophile role is filled by Asp-53.

Belongs to the pseudouridine synthase TruB family. Type 1 subfamily.

The catalysed reaction is uridine(55) in tRNA = pseudouridine(55) in tRNA. Responsible for synthesis of pseudouridine from uracil-55 in the psi GC loop of transfer RNAs. The polypeptide is tRNA pseudouridine synthase B (Malacoplasma penetrans (strain HF-2) (Mycoplasma penetrans)).